Here is a 131-residue protein sequence, read N- to C-terminus: Fluoride-specific ion channel FluC 1 (131 aa).

3 consecutive transmembrane segments (helical) span residues 38–58 (FPLS…IAMM), 69–89 (TVMM…TALN), and 108–128 (IATV…ALLA). 2 residues coordinate Na(+): Gly-79 and Ser-82.

The protein belongs to the fluoride channel Fluc/FEX (TC 1.A.43) family.

The protein resides in the cell membrane. It carries out the reaction fluoride(in) = fluoride(out). Its activity is regulated as follows. Na(+) is not transported, but it plays an essential structural role and its presence is essential for fluoride channel function. Its function is as follows. Fluoride-specific ion channel. Important for reducing fluoride concentration in the cell, thus reducing its toxicity. The polypeptide is Fluoride-specific ion channel FluC 1 (Bifidobacterium longum (strain NCC 2705)).